The following is a 429-amino-acid chain: Histidine--tRNA ligase (429 aa).

This sequence belongs to the class-II aminoacyl-tRNA synthetase family. In terms of assembly, homodimer.

It is found in the cytoplasm. The enzyme catalyses tRNA(His) + L-histidine + ATP = L-histidyl-tRNA(His) + AMP + diphosphate + H(+). The sequence is that of Histidine--tRNA ligase from Streptococcus pneumoniae (strain 70585).